The following is an 856-amino-acid chain: DNA mismatch repair protein MutS (856 aa).

611-618 (GPNMGGKS) is a binding site for ATP.

This sequence belongs to the DNA mismatch repair MutS family.

Its function is as follows. This protein is involved in the repair of mismatches in DNA. It is possible that it carries out the mismatch recognition step. This protein has a weak ATPase activity. In Histophilus somni (strain 129Pt) (Haemophilus somnus), this protein is DNA mismatch repair protein MutS.